A 455-amino-acid polypeptide reads, in one-letter code: Tubulin alpha-1 chain (455 aa).

Positions 11, 75, 144, 148, 149, 183, 210, and 232 each coordinate GTP. Glutamate 75 contacts Mg(2+). Glutamate 258 is a catalytic residue.

Belongs to the tubulin family. As to quaternary structure, dimer of alpha and beta chains. A typical microtubule is a hollow water-filled tube with an outer diameter of 25 nm and an inner diameter of 15 nM. Alpha-beta heterodimers associate head-to-tail to form protofilaments running lengthwise along the microtubule wall with the beta-tubulin subunit facing the microtubule plus end conferring a structural polarity. Microtubules usually have 13 protofilaments but different protofilament numbers can be found in some organisms and specialized cells. Mg(2+) serves as cofactor.

It localises to the cytoplasm. The protein localises to the cytoskeleton. It carries out the reaction GTP + H2O = GDP + phosphate + H(+). In terms of biological role, tubulin is the major constituent of microtubules, a cylinder consisting of laterally associated linear protofilaments composed of alpha- and beta-tubulin heterodimers. Microtubules grow by the addition of GTP-tubulin dimers to the microtubule end, where a stabilizing cap forms. Below the cap, tubulin dimers are in GDP-bound state, owing to GTPase activity of alpha-tubulin. In Schizosaccharomyces pombe (strain 972 / ATCC 24843) (Fission yeast), this protein is Tubulin alpha-1 chain (nda2).